The following is a 103-amino-acid chain: Large ribosomal subunit protein eL43 (103 aa).

The protein belongs to the eukaryotic ribosomal protein eL43 family.

This is Large ribosomal subunit protein eL43 (RPL37A) from Tetrahymena thermophila (strain SB210).